Consider the following 458-residue polypeptide: NADH-quinone oxidoreductase subunit N (458 aa).

13 consecutive transmembrane segments (helical) span residues 3–23, 29–49, 64–84, 92–112, 147–167, 188–208, 222–242, 265–285, 291–311, 320–340, 358–378, 394–414, and 437–457; these read QYLF…LLFL, FGLI…TCTS, QNVK…AIAV, FSVL…SSTL, TLLG…IFVV, ILLF…HAWI, FFAV…ISNL, NILF…AFGQ, FIGF…SNSA, IAYA…VLML, VALA…FIGF, IPTA…YARI, and LLTS…VLLI.

Belongs to the complex I subunit 2 family. In terms of assembly, NDH-1 is composed of 14 different subunits. Subunits NuoA, H, J, K, L, M, N constitute the membrane sector of the complex.

The protein localises to the cell inner membrane. The enzyme catalyses a quinone + NADH + 5 H(+)(in) = a quinol + NAD(+) + 4 H(+)(out). NDH-1 shuttles electrons from NADH, via FMN and iron-sulfur (Fe-S) centers, to quinones in the respiratory chain. The immediate electron acceptor for the enzyme in this species is believed to be ubiquinone. Couples the redox reaction to proton translocation (for every two electrons transferred, four hydrogen ions are translocated across the cytoplasmic membrane), and thus conserves the redox energy in a proton gradient. This chain is NADH-quinone oxidoreductase subunit N, found in Neorickettsia risticii (strain Illinois).